The following is a 217-amino-acid chain: Large ribosomal subunit protein uL3 (217 aa).

The segment at 137 to 160 (VSASHGSHRNHRKPGSIGASSTPS) is disordered.

The protein belongs to the universal ribosomal protein uL3 family. In terms of assembly, part of the 50S ribosomal subunit. Forms a cluster with proteins L14 and L19.

Functionally, one of the primary rRNA binding proteins, it binds directly near the 3'-end of the 23S rRNA, where it nucleates assembly of the 50S subunit. This chain is Large ribosomal subunit protein uL3, found in Clavibacter sepedonicus (Clavibacter michiganensis subsp. sepedonicus).